Consider the following 445-residue polypeptide: UDP-N-acetylmuramoylalanine--D-glutamate ligase (445 aa).

117–123 provides a ligand contact to ATP; the sequence is GSNGKTT.

It belongs to the MurCDEF family.

It localises to the cytoplasm. It carries out the reaction UDP-N-acetyl-alpha-D-muramoyl-L-alanine + D-glutamate + ATP = UDP-N-acetyl-alpha-D-muramoyl-L-alanyl-D-glutamate + ADP + phosphate + H(+). It functions in the pathway cell wall biogenesis; peptidoglycan biosynthesis. In terms of biological role, cell wall formation. Catalyzes the addition of glutamate to the nucleotide precursor UDP-N-acetylmuramoyl-L-alanine (UMA). This is UDP-N-acetylmuramoylalanine--D-glutamate ligase from Neisseria meningitidis serogroup A / serotype 4A (strain DSM 15465 / Z2491).